The sequence spans 166 residues: Lipoprotein signal peptidase (166 aa).

4 consecutive transmembrane segments (helical) span residues 9–29 (AGGS…FDQL), 37–57 (VFAY…LVYN), 71–91 (WQRW…CYLL), and 100–120 (FCTA…DRLL). Active-site residues include Asp-126 and Asp-144. The chain crosses the membrane as a helical span at residues 136 to 156 (HWPAFNLADSAITIGAALLVF).

This sequence belongs to the peptidase A8 family.

The protein resides in the cell inner membrane. It catalyses the reaction Release of signal peptides from bacterial membrane prolipoproteins. Hydrolyzes -Xaa-Yaa-Zaa-|-(S,diacylglyceryl)Cys-, in which Xaa is hydrophobic (preferably Leu), and Yaa (Ala or Ser) and Zaa (Gly or Ala) have small, neutral side chains.. It functions in the pathway protein modification; lipoprotein biosynthesis (signal peptide cleavage). Its function is as follows. This protein specifically catalyzes the removal of signal peptides from prolipoproteins. The chain is Lipoprotein signal peptidase from Paraburkholderia phymatum (strain DSM 17167 / CIP 108236 / LMG 21445 / STM815) (Burkholderia phymatum).